Reading from the N-terminus, the 609-residue chain is Sporulation-specific protein 21 (609 aa).

Disordered regions lie at residues 1 to 50 (MDNI…LENS), 68 to 96 (PASK…DGNS), and 124 to 165 (KLDS…SIKG). Positions 10 to 31 (MEGTSTMTVTSRSSEDSSCISN) are enriched in polar residues. Basic and acidic residues predominate over residues 32 to 43 (HEQDTDTHKDGD). Over residues 68 to 81 (PASKSSRSIGSMKS) the composition is skewed to low complexity. Composition is skewed to polar residues over residues 82–96 (NQSL…DGNS) and 127–136 (STGSQRSKNN). Residues 143–159 (SSTTSQTTCSSSSSSSS) show a composition bias toward low complexity. Coiled coils occupy residues 283-342 (RTKI…DNES), 357-393 (RETL…ATNF), and 424-483 (ENLT…LLIE). A disordered region spans residues 586–609 (DQKSNQNSSTPYKQSQRQVPHSIK). Polar residues predominate over residues 587 to 609 (QKSNQNSSTPYKQSQRQVPHSIK).

The protein belongs to the MPC70 family. Interacts directly with MPC54, NUD1 and SPC42. Interacts with ADY3. Interacts with ADY4. Probable component of a SPB complex composed of ADY3, SSP1, DON1, MPC54, SPO21/MPC70, NUD1 and CNM67.

It is found in the prospore membrane. Its subcellular location is the cytoplasm. The protein resides in the cytoskeleton. The protein localises to the spindle pole. Involved in the pathway that organizes the shaping and sizing of the prospore membrane (PSM) during sporulation. May provide a meiosis-specific scaffold for the assembly of other proteins on spindle pole bodies (SPBs), and may be a limiting component for SPB formation. The chain is Sporulation-specific protein 21 (SPO21) from Saccharomyces cerevisiae (strain ATCC 204508 / S288c) (Baker's yeast).